The sequence spans 754 residues: MARFPTSPAPNLLLRLFSSNKRASSPTAALLTGDFHLIRHFSAGTAARAVKDEKEPWWKESMDKLRNIGISAHIDSGKTTLTERVLFYTGRIHEIHEVRGRDGVGAKMDSMDLEREKGITIQSAATYCTWKDYKVNIIDTPGHVDFTIEVERALRVLDGAILVLCSVGGVQSQSITVDRQMRRYEVPRVAFINKLDRMGADPWKVLNQARAKLRHHSAAVQVPIGLEENFQGLIDLIHVKAYFFHGSSGENVVAGDIPADMEGLVGDKRRELIETVSEVDDVLAEKFLNDEPVSAAELEEAIRRATIAQKFVPVFMGSAFKNKGVQPLLDGVVSFLPSPNEVNNYALDQNNNEERVTLTGSPDGPLVALAFKLEEGRFGQLTYLRVYEGVIKKGDFIINVNTGKRIKVPRLVRMHSNDMEDIQEAHAGQIVAVFGIECASGDTFTDGSVKYTMTSMNVPEPVMSLAVQPVSKDSGGQFSKALNRFQKEDPTFRVGLDPESGQTIISGMGELHLDIYVERMRREYKVDATVGKPRVNFRETITQRAEFDYLHKKQSGGAGQYGRVTGYVEPLPPGSKEKFEFENMIVGQAIPSGFIPAIEKGFKEAANSGSLIGHPVENLRIVLTDGASHAVDSSELAFKMAAIYAFRLCYTAARPVILEPVMLVELKVPTEFQGTVAGDINKRKGIIVGNDQEGDDSVITANVPLNNMFGYSTSLRSMTQGKGEFTMEYKEHSAVSNEVQAQLVNAYSASKATE.

The tr-type G domain maps to 63-340 (DKLRNIGISA…GVVSFLPSPN (278 aa)). GTP is bound by residues 72–79 (AHIDSGKT), 139–143 (DTPGH), and 193–196 (NKLD).

It belongs to the TRAFAC class translation factor GTPase superfamily. Classic translation factor GTPase family. EF-G/EF-2 subfamily. As to expression, expressed in cotyledons and adult leaves at the same levels.

The protein resides in the mitochondrion. The protein operates within protein biosynthesis; polypeptide chain elongation. Its function is as follows. Mitochondrial GTPase that catalyzes the GTP-dependent ribosomal translocation step during translation elongation. During this step, the ribosome changes from the pre-translocational (PRE) to the post-translocational (POST) state as the newly formed A-site-bound peptidyl-tRNA and P-site-bound deacylated tRNA move to the P and E sites, respectively. Catalyzes the coordinated movement of the two tRNA molecules, the mRNA and conformational changes in the ribosome. This Arabidopsis thaliana (Mouse-ear cress) protein is Elongation factor G-2, mitochondrial (MEFG2).